The chain runs to 217 residues: Protein-L-isoaspartate O-methyltransferase (217 aa).

The active site involves Ser-61.

This sequence belongs to the methyltransferase superfamily. L-isoaspartyl/D-aspartyl protein methyltransferase family.

The protein resides in the cytoplasm. It carries out the reaction [protein]-L-isoaspartate + S-adenosyl-L-methionine = [protein]-L-isoaspartate alpha-methyl ester + S-adenosyl-L-homocysteine. Catalyzes the methyl esterification of L-isoaspartyl residues in peptides and proteins that result from spontaneous decomposition of normal L-aspartyl and L-asparaginyl residues. It plays a role in the repair and/or degradation of damaged proteins. The chain is Protein-L-isoaspartate O-methyltransferase from Syntrophotalea carbinolica (strain DSM 2380 / NBRC 103641 / GraBd1) (Pelobacter carbinolicus).